The chain runs to 935 residues: Kinesin heavy chain (935 aa).

Positions 5 to 329 (NIKVVCRFRP…LRFGARAKSI (325 aa)) constitute a Kinesin motor domain. Residues 87–94 (GQTGSGKT) and 237–244 (GSEKVGKT) each bind ATP. A coiled-coil region spans residues 342–887 (AELKALLKKV…SQKSQNSLAA (546 aa)). Disordered regions lie at residues 400–419 (APGFKSPVSDEGSRPATPVP) and 898–935 (RGNGAAIDNGSDDGSLPTSPTDKRDKRSSWMPGFMNSR).

The protein belongs to the TRAFAC class myosin-kinesin ATPase superfamily. Kinesin family. Kinesin subfamily.

Its subcellular location is the cytoplasm. It localises to the cytoskeleton. Its function is as follows. Kinesin is a microtubule-associated force-producing protein that may play a role in organelle transport. Its motor activity is directed toward the microtubule's plus end. The speed of this motor is 4-5 times faster than its animal counterparts. The protein is Kinesin heavy chain of Syncephalastrum racemosum (Filamentous fungus).